Consider the following 304-residue polypeptide: Olfactory receptor 8G2 (304 aa).

At methionine 1–phenylalanine 41 the chain is on the extracellular side. An N-linked (GlcNAc...) asparagine glycan is attached at asparagine 18. Residues leucine 42–isoleucine 62 form a helical membrane-spanning segment. Residues glycine 63–histidine 69 are Cytoplasmic-facing. Residues threonine 70–isoleucine 90 traverse the membrane as a helical segment. Residues threonine 91–cysteine 110 lie on the Extracellular side of the membrane. Cysteine 110 and cysteine 192 are oxidised to a cystine. The helical transmembrane segment at methionine 111 to valine 130 threads the bilayer. At threonine 131–cysteine 154 the chain is on the cytoplasmic side. A helical transmembrane segment spans residues phenylalanine 155–phenylalanine 175. At methionine 176–aspartate 193 the chain is on the extracellular side. A helical transmembrane segment spans residues leucine 194 to valine 214. The Cytoplasmic portion of the chain corresponds to leucine 215 to alanine 217. Residues phenylalanine 218 to isoleucine 238 form a helical membrane-spanning segment. Residues leucine 239–histidine 257 lie on the Extracellular side of the membrane. A helical membrane pass occupies residues isoleucine 258–valine 278. The Cytoplasmic portion of the chain corresponds to serine 279–alanine 304.

It belongs to the G-protein coupled receptor 1 family.

Its subcellular location is the cell membrane. Its function is as follows. Odorant receptor. The sequence is that of Olfactory receptor 8G2 from Homo sapiens (Human).